We begin with the raw amino-acid sequence, 78 residues long: Delta-conotoxin TxVIA (78 aa).

The signal sequence occupies residues M1 to A22. The propeptide occupies D23–N49. 3 disulfide bridges follow: C53–C68, C60–C72, and C67–C77. The residue at position 59 (M59) is a Methionine sulfoxide; partial.

This sequence belongs to the conotoxin O1 superfamily. Expressed by the venom duct.

It localises to the secreted. Delta-conotoxins bind to site 6 of voltage-gated sodium channels (Nav) and inhibit the inactivation process. Binding of this toxin is strongly calcium-dependent but not voltage-dependent. The binding site is most likely on the extracellular side of the sodium channel. Binds receptor sites on both mollusk and rat central nervous system, but despite its high affinity binding to rat sodium channel, it has no functional effect in vivo and in vitro on it. Also has no effect on Gambusia fish. Is important in mollusk for the paralysis of the prey. Upon injection of the peptide, a subordinate lobster assumes an exaggerated dominant posture (of a 'King-Kong' lobster!). This Conus textile (Cloth-of-gold cone) protein is Delta-conotoxin TxVIA.